The chain runs to 129 residues: Glycine cleavage system H protein (129 aa).

Residues 24–106 (SYTVGITEHA…YGEGWFFRVM (83 aa)) enclose the Lipoyl-binding domain. The residue at position 65 (lysine 65) is an N6-lipoyllysine.

This sequence belongs to the GcvH family. The glycine cleavage system is composed of four proteins: P, T, L and H. (R)-lipoate serves as cofactor.

The glycine cleavage system catalyzes the degradation of glycine. The H protein shuttles the methylamine group of glycine from the P protein to the T protein. The protein is Glycine cleavage system H protein of Shewanella baltica (strain OS185).